A 369-amino-acid chain; its full sequence is Anhydro-N-acetylmuramic acid kinase (369 aa).

Glycine 12–aspartate 19 provides a ligand contact to ATP.

This sequence belongs to the anhydro-N-acetylmuramic acid kinase family.

It catalyses the reaction 1,6-anhydro-N-acetyl-beta-muramate + ATP + H2O = N-acetyl-D-muramate 6-phosphate + ADP + H(+). It participates in amino-sugar metabolism; 1,6-anhydro-N-acetylmuramate degradation. It functions in the pathway cell wall biogenesis; peptidoglycan recycling. In terms of biological role, catalyzes the specific phosphorylation of 1,6-anhydro-N-acetylmuramic acid (anhMurNAc) with the simultaneous cleavage of the 1,6-anhydro ring, generating MurNAc-6-P. Is required for the utilization of anhMurNAc either imported from the medium or derived from its own cell wall murein, and thus plays a role in cell wall recycling. The sequence is that of Anhydro-N-acetylmuramic acid kinase from Escherichia coli (strain SMS-3-5 / SECEC).